Reading from the N-terminus, the 315-residue chain is MAFPQPRPQAPQLPQHLWRTVDCQQGAVRAVRFNADGNYLLTCGSDKSLKLWSVSRGTLLKTYSGHGYEVLDADGSYDNSQLCSCSSDKTVILWDVASGQVTRKLRGHAGKVNCVQFNEEATVMLSGSIDGTVRCWDTRSRRMEPIQILDESQDGISSLKVSEHELLTGSVDGRVRRYDLRMGQLQVDYIGSPITCVCFSRDGQCTLSSSLDSTVRLLDKSTGEMLGEYSGHVNKGYKLDCCLTDKDTHVLSCSEDGHVYYWDLVEGSLTLKLPVGKAVVQSLSFHPTEPRLLTSMEGRVQVWGAEPEDAAENES.

WD repeat units lie at residues C23–T62, G65–K104, G107–I146, E151–D188, Y189–E228, V233–K272, and V275–N313.

This sequence belongs to the WD repeat MORG1 family.

The protein localises to the cytoplasm. Functionally, molecular scaffold protein for various multimeric protein complexes. Acts as a module in the assembly of a multicomponent scaffold for the ERK pathway, linking ERK responses to specific agonists. Also involved in response to hypoxia by acting as a negative regulator of HIF1A/HIF-1-alpha. This Danio rerio (Zebrafish) protein is WD repeat domain-containing protein 83 (wdr83).